Reading from the N-terminus, the 441-residue chain is Putative F-box/FBD/LRR-repeat protein At4g00315 (441 aa).

Residues 1–47 enclose the F-box domain; the sequence is MDKTSQLPDELLVKVLSFLPTKDAVRTSLLSMRWKSLWMWLPKLEYD. LRR repeat units follow at residues 57-82, 87-115, 137-164, 165-190, 211-236, 243-271, 293-318, and 319-344; these read QGLA…SLKL, IGSI…SLKL, ILKL…FLGR, VTYS…VVER, LKMS…KVTD, SDNE…DFVL, LGVY…KICS, and CDSD…EAYV. Positions 358 to 410 constitute an FBD domain; sequence QWGNQLNCVPKCLLSSLETFKWSEMYGLLQNQMDVAKYILRNARCLKSATIFF.

The protein is Putative F-box/FBD/LRR-repeat protein At4g00315 of Arabidopsis thaliana (Mouse-ear cress).